The primary structure comprises 298 residues: tRNA-cytidine(32) 2-sulfurtransferase (298 aa).

A PP-loop motif motif is present at residues 48-53; it reads SGGKDS. 3 residues coordinate [4Fe-4S] cluster: Cys123, Cys126, and Cys214.

It belongs to the TtcA family. As to quaternary structure, homodimer. The cofactor is Mg(2+). [4Fe-4S] cluster serves as cofactor.

The protein resides in the cytoplasm. The enzyme catalyses cytidine(32) in tRNA + S-sulfanyl-L-cysteinyl-[cysteine desulfurase] + AH2 + ATP = 2-thiocytidine(32) in tRNA + L-cysteinyl-[cysteine desulfurase] + A + AMP + diphosphate + H(+). Its pathway is tRNA modification. Its function is as follows. Catalyzes the ATP-dependent 2-thiolation of cytidine in position 32 of tRNA, to form 2-thiocytidine (s(2)C32). The sulfur atoms are provided by the cysteine/cysteine desulfurase (IscS) system. The polypeptide is tRNA-cytidine(32) 2-sulfurtransferase (Nitrosospira multiformis (strain ATCC 25196 / NCIMB 11849 / C 71)).